The primary structure comprises 240 residues: Putative N-acetylmannosamine-6-phosphate 2-epimerase (240 aa).

Belongs to the NanE family.

It catalyses the reaction an N-acyl-D-glucosamine 6-phosphate = an N-acyl-D-mannosamine 6-phosphate. Its pathway is amino-sugar metabolism; N-acetylneuraminate degradation; D-fructose 6-phosphate from N-acetylneuraminate: step 3/5. Functionally, converts N-acetylmannosamine-6-phosphate (ManNAc-6-P) to N-acetylglucosamine-6-phosphate (GlcNAc-6-P). The protein is Putative N-acetylmannosamine-6-phosphate 2-epimerase of Vibrio cholerae serotype O1 (strain ATCC 39315 / El Tor Inaba N16961).